A 315-amino-acid chain; its full sequence is Small ribosomal subunit protein uS2 (315 aa).

Residues 241 to 315 (AQHGEERRPG…QPAPGSDANR (75 aa)) are disordered. The segment covering 243 to 288 (HGEERRPGEEDRDAASERGQKDRRDRRDRRGGGRDRERREPREDRA) has biased composition (basic and acidic residues).

Belongs to the universal ribosomal protein uS2 family.

In Anaeromyxobacter sp. (strain Fw109-5), this protein is Small ribosomal subunit protein uS2.